The chain runs to 185 residues: Elongation factor P (185 aa).

This sequence belongs to the elongation factor P family.

It localises to the cytoplasm. It functions in the pathway protein biosynthesis; polypeptide chain elongation. Functionally, involved in peptide bond synthesis. Stimulates efficient translation and peptide-bond synthesis on native or reconstituted 70S ribosomes in vitro. Probably functions indirectly by altering the affinity of the ribosome for aminoacyl-tRNA, thus increasing their reactivity as acceptors for peptidyl transferase. This chain is Elongation factor P, found in Bacillus cereus (strain B4264).